A 557-amino-acid chain; its full sequence is Glutamine--tRNA ligase (557 aa).

Positions 42-52 match the 'HIGH' region motif; sequence PEPNGYLHIGH. Residues 43–45 and 49–55 each bind ATP; these read EPN and HIGHAKS. Residues Asp75 and Tyr220 each contribute to the L-glutamine site. ATP is bound by residues Thr239 and 270 to 271; that span reads RL. Residues 277-281 carry the 'KMSKS' region motif; sequence LTSKR.

The protein belongs to the class-I aminoacyl-tRNA synthetase family. As to quaternary structure, monomer.

It is found in the cytoplasm. The enzyme catalyses tRNA(Gln) + L-glutamine + ATP = L-glutaminyl-tRNA(Gln) + AMP + diphosphate. The polypeptide is Glutamine--tRNA ligase (Haemophilus influenzae (strain 86-028NP)).